The primary structure comprises 265 residues: Phosphonates import ATP-binding protein PhnC (265 aa).

One can recognise an ABC transporter domain in the interval 18-262; that stretch reads LVVEHLRKEY…HLKQIYGGEE (245 aa). 51 to 58 contributes to the ATP binding site; the sequence is GPSGTGKS.

Belongs to the ABC transporter superfamily. Phosphonates importer (TC 3.A.1.9.1) family. In terms of assembly, the complex is composed of two ATP-binding proteins (PhnC), two transmembrane proteins (PhnE) and a solute-binding protein (PhnD).

Its subcellular location is the cell inner membrane. It catalyses the reaction phosphonate(out) + ATP + H2O = phosphonate(in) + ADP + phosphate + H(+). In terms of biological role, part of the ABC transporter complex PhnCDE involved in phosphonates import. Responsible for energy coupling to the transport system. This is Phosphonates import ATP-binding protein PhnC from Nitratidesulfovibrio vulgaris (strain ATCC 29579 / DSM 644 / CCUG 34227 / NCIMB 8303 / VKM B-1760 / Hildenborough) (Desulfovibrio vulgaris).